The chain runs to 300 residues: Acetylglutamate kinase (300 aa).

Residues 72–73 (GG), arginine 94, and asparagine 197 contribute to the substrate site.

The protein belongs to the acetylglutamate kinase family. ArgB subfamily.

The protein resides in the cytoplasm. The catalysed reaction is N-acetyl-L-glutamate + ATP = N-acetyl-L-glutamyl 5-phosphate + ADP. It participates in amino-acid biosynthesis; L-arginine biosynthesis; N(2)-acetyl-L-ornithine from L-glutamate: step 2/4. Functionally, catalyzes the ATP-dependent phosphorylation of N-acetyl-L-glutamate. In Aromatoleum aromaticum (strain DSM 19018 / LMG 30748 / EbN1) (Azoarcus sp. (strain EbN1)), this protein is Acetylglutamate kinase.